The chain runs to 149 residues: Transcriptional repressor NrdR (149 aa).

The segment at 3 to 34 (CPFCSHPETQVVETRVAEDGDFVRRRRQCGAC) is a zinc-finger region. Residues 49 to 139 (PNVVKKDGRR…VYRNFEDIDE (91 aa)) enclose the ATP-cone domain.

It belongs to the NrdR family. Zn(2+) is required as a cofactor.

Its function is as follows. Negatively regulates transcription of bacterial ribonucleotide reductase nrd genes and operons by binding to NrdR-boxes. This Paracidovorax citrulli (strain AAC00-1) (Acidovorax citrulli) protein is Transcriptional repressor NrdR.